Here is a 61-residue protein sequence, read N- to C-terminus: MICHNQQSSQPPTIKTCPGETNCYKKQWRDHRGTIIERGCGCPSVKKGVGIYCCKTDKCNR.

Intrachain disulfides connect Cys-3–Cys-23, Cys-17–Cys-40, Cys-42–Cys-53, and Cys-54–Cys-59.

This sequence belongs to the three-finger toxin family. Short-chain subfamily. Type I alpha-neurotoxin sub-subfamily. Expressed by the venom gland.

The protein localises to the secreted. Binds to muscle nicotinic acetylcholine receptor (nAChR) and inhibit acetylcholine from binding to the receptor, thereby impairing neuromuscular transmission. In Naja haje haje (Egyptian cobra), this protein is Short neurotoxin 2.